Here is a 306-residue protein sequence, read N- to C-terminus: D-alanine--D-alanine ligase B (306 aa).

An ATP-grasp domain is found at 101 to 303; that stretch reads KLLWQGAGLP…FSQLVVRILE (203 aa). Position 134–189 (134–189) interacts with ATP; the sequence is ISALGLPLIVKPSREGSSVGMTKVVEENALQGALSLAFQHDDEILIEKWLCGPEFT. Residues Asp257, Glu270, and Asn272 each contribute to the Mg(2+) site.

Belongs to the D-alanine--D-alanine ligase family. As to quaternary structure, monomer. Requires Mg(2+) as cofactor. The cofactor is Mn(2+).

The protein resides in the cytoplasm. The enzyme catalyses 2 D-alanine + ATP = D-alanyl-D-alanine + ADP + phosphate + H(+). It functions in the pathway cell wall biogenesis; peptidoglycan biosynthesis. In terms of biological role, cell wall formation. This chain is D-alanine--D-alanine ligase B (ddlB), found in Salmonella typhimurium (strain LT2 / SGSC1412 / ATCC 700720).